We begin with the raw amino-acid sequence, 283 residues long: Pantothenate synthetase (283 aa).

Residue 30 to 37 (MGNLHDGH) coordinates ATP. His37 functions as the Proton donor in the catalytic mechanism. (R)-pantoate is bound at residue Gln61. Gln61 contributes to the beta-alanine binding site. An ATP-binding site is contributed by 149-152 (GEKD). Gln155 lines the (R)-pantoate pocket. Residue 186–189 (LSSR) coordinates ATP.

This sequence belongs to the pantothenate synthetase family. In terms of assembly, homodimer.

The protein localises to the cytoplasm. The catalysed reaction is (R)-pantoate + beta-alanine + ATP = (R)-pantothenate + AMP + diphosphate + H(+). It functions in the pathway cofactor biosynthesis; (R)-pantothenate biosynthesis; (R)-pantothenate from (R)-pantoate and beta-alanine: step 1/1. Functionally, catalyzes the condensation of pantoate with beta-alanine in an ATP-dependent reaction via a pantoyl-adenylate intermediate. The sequence is that of Pantothenate synthetase from Escherichia coli (strain ATCC 8739 / DSM 1576 / NBRC 3972 / NCIMB 8545 / WDCM 00012 / Crooks).